Reading from the N-terminus, the 460-residue chain is Bifunctional protein GlmU (460 aa).

Residues 1–235 (MALSAAIVLA…PLTVEGVNDR (235 aa)) form a pyrophosphorylase region. UDP-N-acetyl-alpha-D-glucosamine is bound by residues 9-12 (LAAG), lysine 23, glutamine 76, and 81-82 (GT). Residue aspartate 109 coordinates Mg(2+). Positions 146, 161, 176, and 233 each coordinate UDP-N-acetyl-alpha-D-glucosamine. Asparagine 233 provides a ligand contact to Mg(2+). The interval 236–256 (VQLAALSKTYNRRVCERWMRN) is linker. The tract at residues 257-460 (GVTILDPETT…VEGWKPAWER (204 aa)) is N-acetyltransferase. Residues arginine 338 and lysine 356 each contribute to the UDP-N-acetyl-alpha-D-glucosamine site. Histidine 368 (proton acceptor) is an active-site residue. Residues tyrosine 371 and asparagine 382 each contribute to the UDP-N-acetyl-alpha-D-glucosamine site. Residues 391–392 (NY) and alanine 428 each bind acetyl-CoA.

In the N-terminal section; belongs to the N-acetylglucosamine-1-phosphate uridyltransferase family. The protein in the C-terminal section; belongs to the transferase hexapeptide repeat family. In terms of assembly, homotrimer. The cofactor is Mg(2+).

It is found in the cytoplasm. It carries out the reaction alpha-D-glucosamine 1-phosphate + acetyl-CoA = N-acetyl-alpha-D-glucosamine 1-phosphate + CoA + H(+). The enzyme catalyses N-acetyl-alpha-D-glucosamine 1-phosphate + UTP + H(+) = UDP-N-acetyl-alpha-D-glucosamine + diphosphate. The protein operates within nucleotide-sugar biosynthesis; UDP-N-acetyl-alpha-D-glucosamine biosynthesis; N-acetyl-alpha-D-glucosamine 1-phosphate from alpha-D-glucosamine 6-phosphate (route II): step 2/2. Its pathway is nucleotide-sugar biosynthesis; UDP-N-acetyl-alpha-D-glucosamine biosynthesis; UDP-N-acetyl-alpha-D-glucosamine from N-acetyl-alpha-D-glucosamine 1-phosphate: step 1/1. It functions in the pathway bacterial outer membrane biogenesis; LPS lipid A biosynthesis. Its function is as follows. Catalyzes the last two sequential reactions in the de novo biosynthetic pathway for UDP-N-acetylglucosamine (UDP-GlcNAc). The C-terminal domain catalyzes the transfer of acetyl group from acetyl coenzyme A to glucosamine-1-phosphate (GlcN-1-P) to produce N-acetylglucosamine-1-phosphate (GlcNAc-1-P), which is converted into UDP-GlcNAc by the transfer of uridine 5-monophosphate (from uridine 5-triphosphate), a reaction catalyzed by the N-terminal domain. In Bifidobacterium longum subsp. infantis (strain ATCC 15697 / DSM 20088 / JCM 1222 / NCTC 11817 / S12), this protein is Bifunctional protein GlmU.